The primary structure comprises 95 residues: Large ribosomal subunit protein bL25 (95 aa).

This sequence belongs to the bacterial ribosomal protein bL25 family. Part of the 50S ribosomal subunit; part of the 5S rRNA/L5/L18/L25 subcomplex. Contacts the 5S rRNA. Binds to the 5S rRNA independently of L5 and L18.

Its function is as follows. This is one of the proteins that binds to the 5S RNA in the ribosome where it forms part of the central protuberance. This is Large ribosomal subunit protein bL25 from Shewanella pealeana (strain ATCC 700345 / ANG-SQ1).